The chain runs to 72 residues: Translation initiation factor IF-1 (72 aa).

Residues 1 to 72 (MSKEDSIEVT…TKGRITFRHR (72 aa)) form the S1-like domain.

Belongs to the IF-1 family. In terms of assembly, component of the 30S ribosomal translation pre-initiation complex which assembles on the 30S ribosome in the order IF-2 and IF-3, IF-1 and N-formylmethionyl-tRNA(fMet); mRNA recruitment can occur at any time during PIC assembly.

The protein resides in the cytoplasm. Functionally, one of the essential components for the initiation of protein synthesis. Stabilizes the binding of IF-2 and IF-3 on the 30S subunit to which N-formylmethionyl-tRNA(fMet) subsequently binds. Helps modulate mRNA selection, yielding the 30S pre-initiation complex (PIC). Upon addition of the 50S ribosomal subunit IF-1, IF-2 and IF-3 are released leaving the mature 70S translation initiation complex. The polypeptide is Translation initiation factor IF-1 (Solibacter usitatus (strain Ellin6076)).